The primary structure comprises 226 residues: V-type proton ATPase subunit E 1 (226 aa).

The residue at position 2 (Ala2) is an N-acetylalanine. A Phosphotyrosine modification is found at Tyr56.

Belongs to the V-ATPase E subunit family. As to quaternary structure, V-ATPase is a heteromultimeric enzyme made up of two complexes: the ATP-hydrolytic V1 complex and the proton translocation V0 complex. The V1 complex consists of three catalytic AB heterodimers that form a heterohexamer, three peripheral stalks each consisting of EG heterodimers, one central rotor including subunits D and F, and the regulatory subunits C and H. The proton translocation complex V0 consists of the proton transport subunit a, a ring of proteolipid subunits c9c'', rotary subunit d, subunits e and f, and the accessory subunits ATP6AP1/Ac45 and ATP6AP2/PRR. Interacts with RABL2/RABL2A; binds preferentially to GTP-bound RABL2. Interacts with ALDOC. Interacts with RAB11B. Kidney; localizes to early distal nephron, encompassing thick ascending limbs and distal convoluted tubules (at protein level). Ubiquitous. High expression in the skin.

The protein resides in the apical cell membrane. It is found in the cytoplasmic vesicle. The protein localises to the secretory vesicle. Its subcellular location is the synaptic vesicle membrane. It localises to the clathrin-coated vesicle membrane. Subunit of the V1 complex of vacuolar(H+)-ATPase (V-ATPase), a multisubunit enzyme composed of a peripheral complex (V1) that hydrolyzes ATP and a membrane integral complex (V0) that translocates protons. V-ATPase is responsible for acidifying and maintaining the pH of intracellular compartments and in some cell types, is targeted to the plasma membrane, where it is responsible for acidifying the extracellular environment. The polypeptide is V-type proton ATPase subunit E 1 (ATP6V1E1) (Homo sapiens (Human)).